We begin with the raw amino-acid sequence, 126 residues long: MSALDTSIRVEVKTEYIEQQSSPEDEKYLFSYTITIINLGEQAAKLETRHWIITDANGNTSEVQGAGVVGETPTIPPNTAYQYTSGTLLDTPLGIMHGTYGMVSESGERFEAIIKPFRLATPGLLH.

One can recognise an ApaG domain in the interval 2 to 126 (SALDTSIRVE…FRLATPGLLH (125 aa)).

In Shewanella sp. (strain W3-18-1), this protein is Protein ApaG.